The primary structure comprises 697 residues: Long-chain-fatty-acid--CoA ligase 6 (697 aa).

A helical; Signal-anchor for type III membrane protein transmembrane segment spans residues 25–45 (LSATTLVSMGALAAILAYWFT). Residues 46 to 697 (HRPKALQPPC…QIEELYSISM (652 aa)) lie on the Cytoplasmic side of the membrane.

It belongs to the ATP-dependent AMP-binding enzyme family. Mg(2+) is required as a cofactor. Expressed predominantly in erythrocyte precursors, in particular in reticulocytes, fetal blood cells derived from fetal liver, hemopoietic stem cells from cord blood, bone marrow and brain.

The protein localises to the mitochondrion outer membrane. It is found in the peroxisome membrane. It localises to the microsome membrane. The protein resides in the endoplasmic reticulum membrane. The catalysed reaction is a long-chain fatty acid + ATP + CoA = a long-chain fatty acyl-CoA + AMP + diphosphate. It carries out the reaction (5Z,8Z,11Z,14Z)-eicosatetraenoate + ATP + CoA = (5Z,8Z,11Z,14Z)-eicosatetraenoyl-CoA + AMP + diphosphate. It catalyses the reaction hexadecanoate + ATP + CoA = hexadecanoyl-CoA + AMP + diphosphate. The enzyme catalyses (E)-hexadec-2-enoate + ATP + CoA = (2E)-hexadecenoyl-CoA + AMP + diphosphate. The catalysed reaction is 15-hydroxy-(5Z,8Z,11Z,13E)-eicosatetraenoate + ATP + CoA = 15-hydroxy-(5Z,8Z,11Z,13E)-eicosatetraenoyl-CoA + AMP + diphosphate. It carries out the reaction 12-hydroxy-(5Z,8Z,10E,14Z)-eicosatetraenoate + ATP + CoA = 12-hydroxy-(5Z,8Z,10E,14Z)-eicosatetraenoyl-CoA + AMP + diphosphate. It catalyses the reaction 5-hydroxy-(6E,8Z,11Z,14Z)-eicosatetraenoate + ATP + CoA = 5-hydroxy-(6E,8Z,11Z,14Z)-eicosatetraenoyl-CoA + AMP + diphosphate. Its function is as follows. Catalyzes the conversion of long-chain fatty acids to their active form acyl-CoA for both synthesis of cellular lipids, and degradation via beta-oxidation. Plays an important role in fatty acid metabolism in brain and the acyl-CoAs produced may be utilized exclusively for the synthesis of the brain lipid. The chain is Long-chain-fatty-acid--CoA ligase 6 from Homo sapiens (Human).